Consider the following 859-residue polypeptide: ATP-dependent RNA helicase DDX24 (859 aa).

The residue at position 17 (Lys17) is an N6-acetyllysine. A Phosphoserine modification is found at Ser60. The tract at residues 61 to 175 (PAKNPSSLFS…SQSTAAKVPK (115 aa)) is disordered. Lys71 carries the post-translational modification N6-acetyllysine. Residues Ser82 and Ser94 each carry the phosphoserine modification. The span at 82–91 (SEEEEEEEGE) shows a compositional bias: acidic residues. Over residues 95–105 (PKKKIKLKKSK) the composition is skewed to basic residues. The span at 106 to 115 (NVATEGTSTQ) shows a compositional bias: polar residues. A Q motif motif is present at residues 192 to 220 (SAWKDLFVPRPVLRALSFLGFSAPTPIQV). One can recognise a Helicase ATP-binding domain in the interval 224 to 528 (APAIRDKLDI…RILHKKHTKK (305 aa)). 237-244 (AETGSGKT) contributes to the ATP binding site. The tract at residues 262-374 (NAAPPPSNTE…QTGNLKQELD (113 aa)) is disordered. A compositionally biased stretch (basic and acidic residues) spans 277-293 (TRPEAGAETRSPGKAEA). A phosphoserine mark is found at Ser287 and Ser295. A compositionally biased stretch (acidic residues) spans 294–304 (ESDALPDDTVI). Phosphothreonine is present on Thr302. A Glycyl lysine isopeptide (Lys-Gly) (interchain with G-Cter in SUMO2) cross-link involves residue Lys370. Positions 471 to 474 (DEAD) match the DEAD box motif. In terms of domain architecture, Helicase C-terminal spans 578 to 723 (YLYYFLMQYP…LFPVQTKYMD (146 aa)). Residues Lys624, Lys808, and Lys825 each participate in a glycyl lysine isopeptide (Lys-Gly) (interchain with G-Cter in SUMO2) cross-link. 2 stretches are compositionally biased toward polar residues: residues 799–814 (PLFT…TQSG) and 823–834 (PSKSESALSCLS). The tract at residues 799–859 (PLFTESQKTK…EQPQPSTSAN (61 aa)) is disordered.

This sequence belongs to the DEAD box helicase family. DDX24/MAK5 subfamily. Interacts with FADD. Interacts with RIPK1; this interaction disrupts RLR signaling activation of IFN-dependent transcription factor IRF7. Interacts with NIP7. Interacts with EP300; this interaction prevents TP53 acetylation mediated by EP300. In terms of processing, ubiquitinated by MDM2 without targeting DDX24 for proteasomal degradation. Instead, polyubiquitylated DDX24 promotes interaction with NIP7, a component of pre-rRNP processing complex, and associates with pre-rRNA molecules and pre-ribosomal particles.

It localises to the cytoplasm. It is found in the nucleus. The enzyme catalyses ATP + H2O = ADP + phosphate + H(+). In terms of biological role, ATP-dependent RNA helicase that plays a role in various aspects of RNA metabolism including pre-mRNA splicing and is thereby involved in different biological processes such as cell cycle regulation or innate immunity. Plays an inhibitory role in TP53 transcriptional activity and subsequently in TP53 controlled cell growth arrest and senescence by inhibiting its EP300 mediated acetylation. Negatively regulates cytosolic RNA-mediated innate immune signaling at least in part by affecting RIPK1/IRF7 interactions. Alternatively, possesses antiviral activity by recognizing gammaherpesvirus transcripts in the context of lytic reactivation. Plays an essential role in cell cycle regulation in vascular smooth muscle cells by interacting with and regulating FANCA (Fanconi anemia complementation group A) mRNA. The chain is ATP-dependent RNA helicase DDX24 (DDX24) from Pongo abelii (Sumatran orangutan).